Consider the following 341-residue polypeptide: Glycerol-3-phosphate dehydrogenase [NAD(P)+] (341 aa).

NADPH is bound by residues Ser15, Trp16, Arg36, and Lys110. Sn-glycerol 3-phosphate is bound by residues Lys110, Gly139, and Ser141. Ala143 contributes to the NADPH binding site. Sn-glycerol 3-phosphate is bound by residues Lys194, Asp247, Ser257, Arg258, and Asn259. The active-site Proton acceptor is Lys194. An NADPH-binding site is contributed by Arg258. NADPH contacts are provided by Val282 and Glu284.

Belongs to the NAD-dependent glycerol-3-phosphate dehydrogenase family.

It is found in the cytoplasm. It carries out the reaction sn-glycerol 3-phosphate + NAD(+) = dihydroxyacetone phosphate + NADH + H(+). It catalyses the reaction sn-glycerol 3-phosphate + NADP(+) = dihydroxyacetone phosphate + NADPH + H(+). It participates in membrane lipid metabolism; glycerophospholipid metabolism. Its function is as follows. Catalyzes the reduction of the glycolytic intermediate dihydroxyacetone phosphate (DHAP) to sn-glycerol 3-phosphate (G3P), the key precursor for phospholipid synthesis. The polypeptide is Glycerol-3-phosphate dehydrogenase [NAD(P)+] (Stenotrophomonas maltophilia (strain R551-3)).